Here is a 167-residue protein sequence, read N- to C-terminus: NAD(P)H-quinone oxidoreductase subunit I, chloroplastic (167 aa).

2 consecutive 4Fe-4S ferredoxin-type domains span residues 55-84 (GRIH…VDWI) and 95-124 (KNYS…MTEE). Residues cysteine 64, cysteine 67, cysteine 70, cysteine 74, cysteine 104, cysteine 107, cysteine 110, and cysteine 114 each contribute to the [4Fe-4S] cluster site.

Belongs to the complex I 23 kDa subunit family. As to quaternary structure, NDH is composed of at least 16 different subunits, 5 of which are encoded in the nucleus. It depends on [4Fe-4S] cluster as a cofactor.

Its subcellular location is the plastid. The protein resides in the chloroplast thylakoid membrane. It carries out the reaction a plastoquinone + NADH + (n+1) H(+)(in) = a plastoquinol + NAD(+) + n H(+)(out). The enzyme catalyses a plastoquinone + NADPH + (n+1) H(+)(in) = a plastoquinol + NADP(+) + n H(+)(out). Functionally, NDH shuttles electrons from NAD(P)H:plastoquinone, via FMN and iron-sulfur (Fe-S) centers, to quinones in the photosynthetic chain and possibly in a chloroplast respiratory chain. The immediate electron acceptor for the enzyme in this species is believed to be plastoquinone. Couples the redox reaction to proton translocation, and thus conserves the redox energy in a proton gradient. This Adiantum capillus-veneris (Maidenhair fern) protein is NAD(P)H-quinone oxidoreductase subunit I, chloroplastic.